We begin with the raw amino-acid sequence, 348 residues long: Dihydroorotase (348 aa).

H17 and H19 together coordinate Zn(2+). Substrate-binding positions include 19–21 and N45; that span reads HLR. 3 residues coordinate Zn(2+): K103, H140, and H178. K103 bears the N6-carboxylysine mark. A substrate-binding site is contributed by H140. Substrate is bound at residue L223. D251 is a binding site for Zn(2+). D251 is an active-site residue. Substrate contacts are provided by H255 and A267.

This sequence belongs to the metallo-dependent hydrolases superfamily. DHOase family. Class II DHOase subfamily. Homodimer. Zn(2+) is required as a cofactor.

It catalyses the reaction (S)-dihydroorotate + H2O = N-carbamoyl-L-aspartate + H(+). The protein operates within pyrimidine metabolism; UMP biosynthesis via de novo pathway; (S)-dihydroorotate from bicarbonate: step 3/3. Its function is as follows. Catalyzes the reversible cyclization of carbamoyl aspartate to dihydroorotate. This is Dihydroorotase from Escherichia coli O6:H1 (strain CFT073 / ATCC 700928 / UPEC).